A 276-amino-acid polypeptide reads, in one-letter code: Glutamate 5-kinase (276 aa).

Residue Lys-14 coordinates ATP. Substrate is bound by residues Ser-54, Asp-141, and Asn-157. Residues 177–178 and 219–225 each bind ATP; these read SD and TGGMLTK.

Belongs to the glutamate 5-kinase family.

It localises to the cytoplasm. The catalysed reaction is L-glutamate + ATP = L-glutamyl 5-phosphate + ADP. Its pathway is amino-acid biosynthesis; L-proline biosynthesis; L-glutamate 5-semialdehyde from L-glutamate: step 1/2. Catalyzes the transfer of a phosphate group to glutamate to form L-glutamate 5-phosphate. The chain is Glutamate 5-kinase from Listeria monocytogenes serotype 4b (strain CLIP80459).